The chain runs to 298 residues: Oxygen-dependent coproporphyrinogen-III oxidase (298 aa).

Position 92 (S92) interacts with substrate. Residues H96 and H106 each coordinate a divalent metal cation. H106 (proton donor) is an active-site residue. 108 to 110 (NVR) serves as a coordination point for substrate. Residues H145 and H175 each contribute to the a divalent metal cation site. The segment at 239 to 274 (YVEFNLVYDRGTLFGLQSGGRSESILMSLPPRVRWE) is important for dimerization. 257 to 259 (GGR) lines the substrate pocket.

Belongs to the aerobic coproporphyrinogen-III oxidase family. As to quaternary structure, homodimer. It depends on a divalent metal cation as a cofactor.

The protein resides in the cytoplasm. It catalyses the reaction coproporphyrinogen III + O2 + 2 H(+) = protoporphyrinogen IX + 2 CO2 + 2 H2O. Its pathway is porphyrin-containing compound metabolism; protoporphyrin-IX biosynthesis; protoporphyrinogen-IX from coproporphyrinogen-III (O2 route): step 1/1. In terms of biological role, involved in the heme biosynthesis. Catalyzes the aerobic oxidative decarboxylation of propionate groups of rings A and B of coproporphyrinogen-III to yield the vinyl groups in protoporphyrinogen-IX. This is Oxygen-dependent coproporphyrinogen-III oxidase from Stenotrophomonas maltophilia (strain K279a).